The chain runs to 282 residues: 2-dehydro-3-deoxyphosphooctonate aldolase (282 aa).

It belongs to the KdsA family.

The protein resides in the cytoplasm. The catalysed reaction is D-arabinose 5-phosphate + phosphoenolpyruvate + H2O = 3-deoxy-alpha-D-manno-2-octulosonate-8-phosphate + phosphate. It functions in the pathway carbohydrate biosynthesis; 3-deoxy-D-manno-octulosonate biosynthesis; 3-deoxy-D-manno-octulosonate from D-ribulose 5-phosphate: step 2/3. Its pathway is bacterial outer membrane biogenesis; lipopolysaccharide biosynthesis. In Shewanella piezotolerans (strain WP3 / JCM 13877), this protein is 2-dehydro-3-deoxyphosphooctonate aldolase.